A 148-amino-acid chain; its full sequence is Small ribosomal subunit protein uS12 (148 aa).

Belongs to the universal ribosomal protein uS12 family. As to quaternary structure, part of the 30S ribosomal subunit.

With S4 and S5 plays an important role in translational accuracy. Located at the interface of the 30S and 50S subunits. This is Small ribosomal subunit protein uS12 from Methanocaldococcus jannaschii (strain ATCC 43067 / DSM 2661 / JAL-1 / JCM 10045 / NBRC 100440) (Methanococcus jannaschii).